Here is a 515-residue protein sequence, read N- to C-terminus: Maturase K (515 aa).

The protein belongs to the intron maturase 2 family. MatK subfamily.

The protein localises to the plastid. The protein resides in the chloroplast. Its function is as follows. Usually encoded in the trnK tRNA gene intron. Probably assists in splicing its own and other chloroplast group II introns. This Pinus coulteri (Coulter pine) protein is Maturase K.